The following is a 942-amino-acid chain: Leucine--tRNA ligase (942 aa).

The 'HIGH' region signature appears at 41–51 (PYLNGVLHAGH). A 'KMSKS' region motif is present at residues 633–637 (KLSKS). ATP is bound at residue lysine 636.

This sequence belongs to the class-I aminoacyl-tRNA synthetase family.

Its subcellular location is the cytoplasm. The enzyme catalyses tRNA(Leu) + L-leucine + ATP = L-leucyl-tRNA(Leu) + AMP + diphosphate. This is Leucine--tRNA ligase from Methanocaldococcus jannaschii (strain ATCC 43067 / DSM 2661 / JAL-1 / JCM 10045 / NBRC 100440) (Methanococcus jannaschii).